A 453-amino-acid chain; its full sequence is MSNDLPTKKDLVKWDQEDALNWTRGEYEIPNSKACGGEADGKAIYFCGNSLGLLNKKARQHIMEELDVWSTSSVTGHFNHPYQRPWKHVDEPLTPHLAKLVGAREEEVAHTSTLTSNMHNLFTSFYQPTEKRWKIVIEKGSFPSDWYAVHSHPRLHDKVLRPEQIDNAIIALVPREGEDTLRTEDILKVLDDNKDSIAIVWLPLVQYYTGQLFDISSISPKVHEIGALLGLDMAHGIGNVECKLNEWNVDFAVWCTYKYLNAGPAAIGGFYIRSGLEDGGRRLAGWWGNDARTRFHMSPNFQPTPGAKGYQHSCTPVFSSIPLLATLQLIEAVGFSNMVEKARRLTGTLEALLKASRYHVHPADPKGKIGFKIITPAAPYRGTQLSLVILPEEEHVMPKVFDRMLRKGLVGDERKPSVIRLSPVVLYNTFEEVGRAVEIVEEALEEEEEERKR.

Residues leucine 114, threonine 115, 142–145, aspartate 232, histidine 235, and tyrosine 257 each bind pyridoxal 5'-phosphate; that span reads FPSD. Lysine 258 carries the N6-(pyridoxal phosphate)lysine modification. Position 286 (tryptophan 286) interacts with pyridoxal 5'-phosphate.

The protein belongs to the kynureninase family. Homodimer. Pyridoxal 5'-phosphate is required as a cofactor.

It localises to the cytoplasm. It catalyses the reaction L-kynurenine + H2O = anthranilate + L-alanine + H(+). The catalysed reaction is 3-hydroxy-L-kynurenine + H2O = 3-hydroxyanthranilate + L-alanine + H(+). It participates in amino-acid degradation; L-kynurenine degradation; L-alanine and anthranilate from L-kynurenine: step 1/1. It functions in the pathway cofactor biosynthesis; NAD(+) biosynthesis; quinolinate from L-kynurenine: step 2/3. Its function is as follows. Catalyzes the cleavage of L-kynurenine (L-Kyn) and L-3-hydroxykynurenine (L-3OHKyn) into anthranilic acid (AA) and 3-hydroxyanthranilic acid (3-OHAA), respectively. This Cryptococcus neoformans var. neoformans serotype D (strain JEC21 / ATCC MYA-565) (Filobasidiella neoformans) protein is Kynureninase.